Here is a 905-residue protein sequence, read N- to C-terminus: Gamma-tubulin complex component 2 (905 aa).

Phosphotyrosine is present on Y83. Positions 877 to 905 are disordered; that stretch reads AERSQKAAPQVPVPRGPSAPAPRVAIPAQ. The span at 887–896 shows a compositional bias: pro residues; sequence VPVPRGPSAP.

The protein belongs to the TUBGCP family. Component of the gamma-tubulin ring complex (gTuRC) consisting of TUBGCP2, TUBGCP3, TUBGCP4, TUBGCP5 and TUBGCP6 and gamma-tubulin TUBG1 or TUBG2. TUBGCP2, TUBGCP3, TUBGCP4, TUBGCP5 and TUBGCP6 assemble in a 5:5:2:1:1 stoichiometry; each is associated with a gamma-tubulin, thereby arranging 14 gamma-tubulins in a helical manner. Gamma-tubulin at the first position is blocked by TUBGCP3 at the last position, allowing 13 protafilaments to grow into a microtubule. The gTuRC (via TUBGCP3 and TUBGCP6) interacts with ACTB and MZT1; the interactions form a luminal bridge that stabilizes the initial structure during complex assembly. The gTuRC (via TUBGCP2) interacts with MZT2A/MZT2B and CDK5RAP2 (via CM1 motif); the interactions play a role in gTuRC activation. Interacts with ATF5; the ATF5:PCNT:polyglutamylated tubulin (PGT) tripartite unites the mother centriole and the pericentriolar material (PCM) in the centrosome.

It is found in the cytoplasm. Its subcellular location is the cytoskeleton. The protein resides in the microtubule organizing center. The protein localises to the centrosome. Component of the gamma-tubulin ring complex (gTuRC) which mediates microtubule nucleation. The gTuRC regulates the minus-end nucleation of alpha-beta tubulin heterodimers that grow into microtubule protafilaments, a critical step in centrosome duplication and spindle formation. Plays a role in neuronal migration. The sequence is that of Gamma-tubulin complex component 2 (Tubgcp2) from Mus musculus (Mouse).